The following is a 144-amino-acid chain: Transcription antitermination protein NusB (144 aa).

This sequence belongs to the NusB family.

Functionally, involved in transcription antitermination. Required for transcription of ribosomal RNA (rRNA) genes. Binds specifically to the boxA antiterminator sequence of the ribosomal RNA (rrn) operons. In Histophilus somni (strain 2336) (Haemophilus somnus), this protein is Transcription antitermination protein NusB.